Consider the following 700-residue polypeptide: Leucine zipper putative tumor suppressor 3 (700 aa).

Disordered regions lie at residues 1–20 (MAPA…PAPH), 40–121 (RADP…SEDK), 133–188 (LRGS…SEPL), and 202–344 (FHSM…PPSP). Over residues 109–121 (NRERPGRYPSEDK) the composition is skewed to basic and acidic residues. A compositionally biased stretch (polar residues) spans 203-216 (HSMQNLCPPQTNGT). Low complexity-rich tracts occupy residues 248–265 (DSGR…SSYS) and 301–321 (GTSD…MGRS). Residues 322–333 (GHLGSGEGGNGG) are compositionally biased toward gly residues. Phosphoserine is present on residues Ser-343 and Ser-345. Coiled coils occupy residues 345 to 523 (SALI…SLRD) and 597 to 666 (TRAL…RLRE). Residues 662–700 (RRLRERGAAGGSSTPTPQHGEEKKAWTPSRLERIESTEI) form a disordered region. Positions 680–700 (HGEEKKAWTPSRLERIESTEI) are enriched in basic and acidic residues.

This sequence belongs to the LZTS3 family. In terms of assembly, interacts (via C-terminus) with SHANK3 (via PDZ domain). Interacts (via coiled coil) with SIPA1L1. Can form homooligomers.

The protein localises to the synapse. It localises to the postsynaptic density. It is found in the cell projection. The protein resides in the dendritic spine. Its subcellular location is the dendrite. The protein localises to the cytoplasm. It localises to the cytoskeleton. Functionally, may be involved in promoting the maturation of dendritic spines, probably via regulating SIPA1L1 levels at the postsynaptic density of synapses. This is Leucine zipper putative tumor suppressor 3 from Mus musculus (Mouse).